A 478-amino-acid polypeptide reads, in one-letter code: Proline--tRNA ligase (478 aa).

The protein belongs to the class-II aminoacyl-tRNA synthetase family. ProS type 3 subfamily. As to quaternary structure, homodimer.

It is found in the cytoplasm. It carries out the reaction tRNA(Pro) + L-proline + ATP = L-prolyl-tRNA(Pro) + AMP + diphosphate. Functionally, catalyzes the attachment of proline to tRNA(Pro) in a two-step reaction: proline is first activated by ATP to form Pro-AMP and then transferred to the acceptor end of tRNA(Pro). The sequence is that of Proline--tRNA ligase from Ignicoccus hospitalis (strain KIN4/I / DSM 18386 / JCM 14125).